Consider the following 380-residue polypeptide: Probable protein phosphatase 2C 2 (380 aa).

Residues 122–376 (GYSVYCKRGK…DDISVMLIQL (255 aa)) form the PPM-type phosphatase domain. Mn(2+) contacts are provided by aspartate 158, glycine 159, aspartate 321, and aspartate 367.

Belongs to the PP2C family. Mg(2+) is required as a cofactor. Mn(2+) serves as cofactor.

The enzyme catalyses O-phospho-L-seryl-[protein] + H2O = L-seryl-[protein] + phosphate. It carries out the reaction O-phospho-L-threonyl-[protein] + H2O = L-threonyl-[protein] + phosphate. The chain is Probable protein phosphatase 2C 2 from Arabidopsis thaliana (Mouse-ear cress).